A 155-amino-acid polypeptide reads, in one-letter code: Cardio acceleratory peptide 2b (155 aa).

Positions 1–26 are cleaved as a signal peptide; sequence MKAIFSLYNIVSAILLLVLLAEFSTA. A propeptide spanning residues 27 to 33 is cleaved from the precursor; it reads ELNHDKN. Valine 47 is modified (valine amide). A propeptide spanning residues 50 to 85 is cleaved from the precursor; the sequence is SDPSLANSLRDASDAAVFDGLYGDASQEDYNEADYQ. Valine 96 is modified (valine amide). The propeptide occupies 99–117; it reads SDAELRKFAHLLALQQVLD. A Leucine amide modification is found at leucine 134. Residues 138–155 constitute a propeptide that is removed on maturation; sequence SVDAKAFSDASKGQQEFN.

It belongs to the pyrokinin family.

It localises to the secreted. CAP-1 and CAP-2, but not CAP-3 are ligands for the Capa receptor. CAP-1 and CAP-2 are probably components of the signal transduction pathway that leads to Malpighian tubule fluid secretion via the second messenger nitric oxide. The protein is Cardio acceleratory peptide 2b of Drosophila pseudoobscura pseudoobscura (Fruit fly).